The sequence spans 382 residues: Serine protease 43 (382 aa).

The signal sequence occupies residues 1 to 27 (MGGFCGADRGGFLALLVWLQLLQPLFS). The disordered stretch occupies residues 30 to 97 (YKPREDSGVM…SGTTTKITLE (68 aa)). Composition is skewed to polar residues over residues 56-68 (AQQS…SISH) and 85-95 (GSPSGTTTKIT). Residues 119 to 355 (VDPGSLSAGR…YNEWVSYVLS (237 aa)) form the Peptidase S1 domain. Cys-144 and Cys-160 are disulfide-bonded. Catalysis depends on charge relay system residues His-159 and Asp-205. 3 disulfides stabilise this stretch: Cys-239/Cys-313, Cys-272/Cys-293, and Cys-303/Cys-331. The Charge relay system role is filled by Ser-307. Residues 362–382 (PMGVLVLYLSLVFPLALLVAL) form a helical membrane-spanning segment.

This sequence belongs to the peptidase S1 family. In terms of tissue distribution, testis-specific. Expressed in germ cells at the stages from late pachytene spermatocytes to spermatids.

Its subcellular location is the cell membrane. Functionally, plays a role in spermatogenesis. Involved in germ cell survival during meiosis. Lacks protease activity in vitro. In Mus musculus (Mouse), this protein is Serine protease 43.